A 93-amino-acid chain; its full sequence is Cobalt transport protein CbiN (93 aa).

2 helical membrane passes run L5–G25 and L63–C83.

Belongs to the CbiN family. Forms an energy-coupling factor (ECF) transporter complex composed of an ATP-binding protein (A component, CbiO), a transmembrane protein (T component, CbiQ) and 2 possible substrate-capture proteins (S components, CbiM and CbiN) of unknown stoichimetry.

The protein resides in the cell inner membrane. Its pathway is cofactor biosynthesis; adenosylcobalamin biosynthesis. Part of the energy-coupling factor (ECF) transporter complex CbiMNOQ involved in cobalt import. The protein is Cobalt transport protein CbiN of Salmonella gallinarum (strain 287/91 / NCTC 13346).